Consider the following 226-residue polypeptide: Ribonuclease 3 (226 aa).

The 123-residue stretch at 7–129 (DARLQQALGY…LFGAVFLDAG (123 aa)) folds into the RNase III domain. Glutamate 42 serves as a coordination point for Mg(2+). Aspartate 46 is an active-site residue. Residues aspartate 115 and glutamate 118 each coordinate Mg(2+). The active site involves glutamate 118. A DRBM domain is found at 156–226 (DPKTRLQEIL…ARQACAELQR (71 aa)).

Belongs to the ribonuclease III family. In terms of assembly, homodimer. It depends on Mg(2+) as a cofactor.

The protein localises to the cytoplasm. The catalysed reaction is Endonucleolytic cleavage to 5'-phosphomonoester.. In terms of biological role, digests double-stranded RNA. Involved in the processing of primary rRNA transcript to yield the immediate precursors to the large and small rRNAs (23S and 16S). Processes some mRNAs, and tRNAs when they are encoded in the rRNA operon. Processes pre-crRNA and tracrRNA of type II CRISPR loci if present in the organism. In Thiobacillus denitrificans (strain ATCC 25259 / T1), this protein is Ribonuclease 3.